Consider the following 166-residue polypeptide: MSQSNLIQTDRFVLSETERSSIEHEMHHYEDPRAASIEALKIVQKQRGWVPDGAIPAIGEVLGIPASDVEGVATFYSQIFRQPVGRHIIRVCDSMVCYIGGHESVVGEIQKQLGIGLGQTTADGRFTLLPVCCLGNCDKAPALMIDDDTHGDVRPDGVAKLLEAYV.

[2Fe-2S] cluster-binding residues include cysteine 92, cysteine 97, cysteine 133, and cysteine 137.

This sequence belongs to the complex I 24 kDa subunit family. As to quaternary structure, composed of 13 different subunits. Subunits NuoCD, E, F, and G constitute the peripheral sector of the complex. [2Fe-2S] cluster serves as cofactor.

It carries out the reaction a quinone + NADH + 5 H(+)(in) = a quinol + NAD(+) + 4 H(+)(out). Functionally, NDH-1 shuttles electrons from NADH, via FMN and iron-sulfur (Fe-S) centers, to quinones in the respiratory chain. The immediate electron acceptor for the enzyme in this species is believed to be ubiquinone. Couples the redox reaction to proton translocation (for every two electrons transferred, four hydrogen ions are translocated across the cytoplasmic membrane), and thus conserves the redox energy in a proton gradient. The chain is NADH-quinone oxidoreductase subunit E (nuoE) from Pseudomonas aeruginosa (strain ATCC 15692 / DSM 22644 / CIP 104116 / JCM 14847 / LMG 12228 / 1C / PRS 101 / PAO1).